We begin with the raw amino-acid sequence, 303 residues long: ATP synthase gamma chain (303 aa).

It belongs to the ATPase gamma chain family. In terms of assembly, F-type ATPases have 2 components, CF(1) - the catalytic core - and CF(0) - the membrane proton channel. CF(1) has five subunits: alpha(3), beta(3), gamma(1), delta(1), epsilon(1). CF(0) has three main subunits: a, b and c.

It is found in the cell membrane. Its function is as follows. Produces ATP from ADP in the presence of a proton gradient across the membrane. The gamma chain is believed to be important in regulating ATPase activity and the flow of protons through the CF(0) complex. This is ATP synthase gamma chain from Oenococcus oeni (strain ATCC BAA-331 / PSU-1).